A 360-amino-acid polypeptide reads, in one-letter code: MMAGCGEIDHSINMLPTNRKANESCSNTAPSLTVPECAICLQTCVHPVSLPCKHVFCYLCVKGASWLGKRCALCRQEIPEDFLDKPTLLSPEELKAASRGNGEYAWYYEGRNGWWQYDERTSRELEDAFSKGKKNTEMLIAGFLYVADLENMVQYRRNEHGRRRKIKRDIIDIPKKGVAGLRLDCDANTVNLARESSADGADSVSAQSGASVQPLVSSVRPLTSVDGQLTSPATPSPDASTSLEDSFAHLQLSGDSIAERSHRGEGEEDHESPSSGRVPAPDTSIEETESDASSDSENVSSAVVAQHSLTQQRLLVSNANQTVSDRSDQSGTDRSVAGGGTVSVSVRSRRPDGQCTVTEV.

The segment at C37–R75 adopts an RING-type zinc-finger fold. Residues K85 and K95 each participate in a glycyl lysine isopeptide (Lys-Gly) (interchain with G-Cter in ubiquitin) cross-link. The WWE domain occupies E92–R168. 3 residues coordinate a glycoprotein: Y108, R111, and W115. K131 participates in a covalent cross-link: Glycyl lysine isopeptide (Lys-Gly) (interchain with G-Cter in ubiquitin). A glycoprotein-binding residues include Y145, Q154, R164, and K176. K176 participates in a covalent cross-link: Glycyl lysine isopeptide (Lys-Gly) (interchain with G-Cter in ubiquitin). Positions E259–V360 are disordered. Residues S284–S294 are compositionally biased toward acidic residues. Phosphoserine occurs at positions 290 and 294. Positions D295–A305 are enriched in low complexity. Residues H307–D333 show a composition bias toward polar residues.

As to quaternary structure, can form homooligomers. Interacts with PARsylated AXIN1, AXIN2, BLZF1, CASC3, H1-2, IPO7, LIG3, NCL, PARP1, XRCC1, XRCC5 and XRCC6. Interacts with DDB1, DHX15, IQGAP1, LRPPRC, PARP2, PRKDC, RUVBL2, TNKS1 and TNKS2. Binding often leads to interactor ubiquitination, in the presence of the appropriate E1 and E2 enzymes, and proteasomal degradation. In terms of processing, ubiquitinated; autoubiquitinated. Autoubiquitination is enhanced upon poly(ADP-ribose)-binding.

It localises to the cytoplasm. It is found in the cytosol. The protein localises to the nucleus. It catalyses the reaction S-ubiquitinyl-[E2 ubiquitin-conjugating enzyme]-L-cysteine + [acceptor protein]-L-lysine = [E2 ubiquitin-conjugating enzyme]-L-cysteine + N(6)-ubiquitinyl-[acceptor protein]-L-lysine.. Its pathway is protein modification; protein ubiquitination. In terms of biological role, E3 ubiquitin-protein ligase that specifically binds poly-ADP-ribosylated (PARsylated) proteins and mediates their ubiquitination and subsequent degradation. May regulate many important biological processes, such as cell survival and DNA damage response. Acts as an activator of the Wnt signaling pathway by mediating the ubiquitination of PARsylated AXIN1 and AXIN2, 2 key components of the beta-catenin destruction complex. Acts in cooperation with tankyrase proteins (TNKS and TNKS2), which mediate PARsylation of target proteins AXIN1, AXIN2, BLZF1, CASC3, TNKS and TNKS2. Recognizes and binds tankyrase-dependent PARsylated proteins via its WWE domain and mediates their ubiquitination, leading to their degradation. Different ubiquitin linkage types have been observed: TNKS2 undergoes ubiquitination at 'Lys-48' and 'Lys-63', while AXIN1 is only ubiquitinated at 'Lys-48'. May regulate TNKS and TNKS2 subcellular location, preventing aggregation at a centrosomal location. Neuroprotective protein. Protects the brain against N-methyl-D-aspartate (NMDA) receptor-mediated glutamate excitotoxicity and ischemia, by interfering with PAR-induced cell death, called parthanatos. Prevents nuclear translocation of AIFM1 in a PAR-binding dependent manner. Does not affect PARP1 activation. Protects against cell death induced by DNA damaging agents, such as N-methyl-N-nitro-N-nitrosoguanidine (MNNG) and rescues cells from G1 arrest. Promotes cell survival after gamma-irradiation. Facilitates DNA repair. The sequence is that of E3 ubiquitin-protein ligase RNF146 (RNF146) from Macaca fascicularis (Crab-eating macaque).